A 513-amino-acid chain; its full sequence is MAELQMLLEEEIPGGRRALFDSYTNLERVADYCENNYIQSADKQRALEETKAYTTQSLASVAYLINTLANNVLQMLDIQASQLRRMESSINHISQTVDIHKEKVARREIGILTTNKNTSRTHKIIAPANLERPVRYIRKPIDYTILDDIGHGVKWLLRFKVSTQNMKMGGLPRTTPPTQKPPSPPMSGKGTLGRHSPYRTLEPVRPPVVPNDYVPSPTRNMAPSQQSPVRTASVNQRNRTYSSSGSSGGSHPSSRSSSRENSGSGSVGVPIAVPTPSPPSVFPAPAGSAGTPPLPATSASAPAPLVPATVPSSTAPNAAAGGAPNLADGFTSPTPPVVSSTPPTGHPVQFYSMNRPASRHTPPTIGGSLPYRRPPSITSQTSLQNQMNGGPFYSQNPVSDTPPPPPPVEEPVFDESPPPPPPPEDYEEEEAAVVEYSDPYAEEDPPWAPRSYLEKVVAIYDYTKDKEDELSFQEGAIIYVIKKNDDGWYEGVMNGVTGLFPGNYVESIMHYSE.

A Phosphoserine modification is found at serine 40. A t-SNARE coiled-coil homology domain is found at 45–107 (RALEETKAYT…DIHKEKVARR (63 aa)). Positions 167 to 431 (KMGGLPRTTP…PPEDYEEEEA (265 aa)) are disordered. The span at 174–185 (TTPPTQKPPSPP) shows a compositional bias: pro residues. Residues serine 183 and serine 227 each carry the phosphoserine modification. The span at 217–241 (PTRNMAPSQQSPVRTASVNQRNRTY) shows a compositional bias: polar residues. Residues 242–272 (SSSGSSGGSHPSSRSSSRENSGSGSVGVPIA) are compositionally biased toward low complexity. The segment covering 273–282 (VPTPSPPSVF) has biased composition (pro residues). Residues 283 to 325 (PAPAGSAGTPPLPATSASAPAPLVPATVPSSTAPNAAAGGAPN) show a composition bias toward low complexity. Threonine 361 carries the post-translational modification Phosphothreonine. Serine 368 bears the Phosphoserine mark. Polar residues predominate over residues 376-399 (SITSQTSLQNQMNGGPFYSQNPVS). Positions 400–409 (DTPPPPPPVE) are enriched in pro residues. The SH3 domain maps to 451–510 (SYLEKVVAIYDYTKDKEDELSFQEGAIIYVIKKNDDGWYEGVMNGVTGLFPGNYVESIMH).

The protein belongs to the ABI family. In terms of assembly, component of the WAVE complex composed of ABI2, CYFIP1 or CYFIP2, BRK1, NCKAP1 and WASF1/WAVE1. Within the complex, a heterodimer containing NCKAP1 and CYFIP1 interacts with a heterotrimer formed by WAVE1, ABI2 and BRK1. CYFIP2 binds to activated RAC1 which causes the complex to dissociate, releasing activated WASF1. Interacts (via SH3 domain) with ABL1 and ABL2. As to quaternary structure, (Microbial infection) Interacts with human cytomegalovirus UL135. Post-translationally, phosphorylated by ABL1. In terms of tissue distribution, widely expressed. Abundant in testes, ovary, thymus, and colon, with lower but detectable levels in prostate, peripheral blood leukocytes, and spleen.

Its subcellular location is the cytoplasm. The protein localises to the nucleus. It is found in the cell projection. The protein resides in the lamellipodium. It localises to the filopodium. Its subcellular location is the cytoskeleton. The protein localises to the cell junction. It is found in the adherens junction. In terms of biological role, regulator of actin cytoskeleton dynamics underlying cell motility and adhesion. Functions as a component of the WAVE complex, which activates actin nucleating machinery Arp2/3 to drive lamellipodia formation. Acts as a regulator and substrate of nonreceptor tyrosine kinases ABL1 and ABL2 involved in processes linked to cell growth and differentiation. Positively regulates ABL1-mediated phosphorylation of ENAH, which is required for proper polymerization of nucleated actin filaments at the leading edge. Contributes to the regulation of actin assembly at the tips of neuron projections. In particular, controls dendritic spine morphogenesis and may promote dendritic spine specification toward large mushroom-type spines known as repositories of memory in the brain. In hippocampal neurons, may mediate actin-dependent BDNF-NTRK2 early endocytic trafficking that triggers dendrite outgrowth. Participates in ocular lens morphogenesis, likely by regulating lamellipodia-driven adherens junction formation at the epithelial cell-secondary lens fiber interface. Also required for nascent adherens junction assembly in epithelial cells. The chain is Abl interactor 2 from Homo sapiens (Human).